Consider the following 425-residue polypeptide: Serine--tRNA ligase (425 aa).

Disordered regions lie at residues 43–69 (QRSS…SDPK) and 108–134 (LPNL…WGKP). Residues 117–134 (PEGRDENDNQERHRWGKP) show a composition bias toward basic and acidic residues. 233–235 (TAE) provides a ligand contact to L-serine. 264–266 (RRE) is a binding site for ATP. Residue Glu287 coordinates L-serine. 351–354 (EISS) provides a ligand contact to ATP. An L-serine-binding site is contributed by Ser385.

This sequence belongs to the class-II aminoacyl-tRNA synthetase family. Type-1 seryl-tRNA synthetase subfamily. In terms of assembly, homodimer. The tRNA molecule binds across the dimer.

It localises to the cytoplasm. The catalysed reaction is tRNA(Ser) + L-serine + ATP = L-seryl-tRNA(Ser) + AMP + diphosphate + H(+). It catalyses the reaction tRNA(Sec) + L-serine + ATP = L-seryl-tRNA(Sec) + AMP + diphosphate + H(+). The protein operates within aminoacyl-tRNA biosynthesis; selenocysteinyl-tRNA(Sec) biosynthesis; L-seryl-tRNA(Sec) from L-serine and tRNA(Sec): step 1/1. Functionally, catalyzes the attachment of serine to tRNA(Ser). Is also able to aminoacylate tRNA(Sec) with serine, to form the misacylated tRNA L-seryl-tRNA(Sec), which will be further converted into selenocysteinyl-tRNA(Sec). In Prochlorococcus marinus (strain MIT 9313), this protein is Serine--tRNA ligase.